A 32-amino-acid chain; its full sequence is Protein YthB (32 aa).

This is Protein YthB from Escherichia coli (strain K12).